The sequence spans 334 residues: Glycerol-3-phosphate dehydrogenase [NAD(P)+] (334 aa).

The NADPH site is built by Ser-10, Trp-11, His-31, Arg-32, and Lys-105. Sn-glycerol 3-phosphate is bound by residues Lys-105, Gly-136, and Ser-138. Residue Ala-140 participates in NADPH binding. The sn-glycerol 3-phosphate site is built by Lys-191, Asp-244, Ser-254, Arg-255, and Asn-256. Lys-191 serves as the catalytic Proton acceptor. Arg-255 lines the NADPH pocket. Positions 279 and 281 each coordinate NADPH.

This sequence belongs to the NAD-dependent glycerol-3-phosphate dehydrogenase family.

It is found in the cytoplasm. It catalyses the reaction sn-glycerol 3-phosphate + NAD(+) = dihydroxyacetone phosphate + NADH + H(+). The enzyme catalyses sn-glycerol 3-phosphate + NADP(+) = dihydroxyacetone phosphate + NADPH + H(+). It functions in the pathway membrane lipid metabolism; glycerophospholipid metabolism. In terms of biological role, catalyzes the reduction of the glycolytic intermediate dihydroxyacetone phosphate (DHAP) to sn-glycerol 3-phosphate (G3P), the key precursor for phospholipid synthesis. The polypeptide is Glycerol-3-phosphate dehydrogenase [NAD(P)+] (Chlorobium phaeobacteroides (strain BS1)).